Here is a 467-residue protein sequence, read N- to C-terminus: 2-succinylbenzoate--CoA ligase (467 aa).

The protein belongs to the ATP-dependent AMP-binding enzyme family. MenE subfamily.

It carries out the reaction 2-succinylbenzoate + ATP + CoA = 2-succinylbenzoyl-CoA + AMP + diphosphate. Its pathway is quinol/quinone metabolism; 1,4-dihydroxy-2-naphthoate biosynthesis; 1,4-dihydroxy-2-naphthoate from chorismate: step 5/7. The protein operates within quinol/quinone metabolism; menaquinone biosynthesis. Functionally, converts 2-succinylbenzoate (OSB) to 2-succinylbenzoyl-CoA (OSB-CoA). In Listeria monocytogenes serovar 1/2a (strain ATCC BAA-679 / EGD-e), this protein is 2-succinylbenzoate--CoA ligase.